Consider the following 1002-residue polypeptide: Eukaryotic translation initiation factor 5B (1002 aa).

2 disordered regions span residues 1–172 and 184–402; these read MAKK…GLAA and EEQE…NKKD. Residues 13–23 are compositionally biased toward acidic residues; that stretch reads WDEEFEEDAAQ. A compositionally biased stretch (polar residues) spans 27–37; it reads ISATPTPNPES. The segment covering 47-57 has biased composition (low complexity); it reads EASASAEGAEA. Basic and acidic residues-rich tracts occupy residues 75 to 111 and 120 to 154; these read KKVI…EQAA and QKEK…ESDK. Residues 155 to 172 are compositionally biased toward low complexity; the sequence is PSASAKKPAKKVPAGLAA. 2 stretches are compositionally biased toward basic and acidic residues: residues 184-252 and 267-276; these read EEQE…ERRR and AKKDGEENKP. The span at 277 to 287 shows a compositional bias: basic residues; that stretch reads KKVVYSKKKKR. Over residues 297–306 the composition is skewed to basic and acidic residues; the sequence is IKSDSKKDSE. 2 stretches are compositionally biased toward acidic residues: residues 307 to 342 and 352 to 370; these read VVPD…EETQ and DQNQ…EEEE. Residues 381–398 show a composition bias toward low complexity; sequence STPAATPAATPTPSSASP. The tr-type G domain maps to 403–621; sequence LRSPICCILG…LLELTQKRMS (219 aa). The residue at position 405 (S405) is a Phosphoserine. Positions 412 to 419 are G1; sequence GHVDTGKT. D415 provides a ligand contact to K(+). Position 415 (D415) interacts with Na(+). Residues 415-420, Q431, and 437-439 each bind GTP; these read DTGKTK and GIT. T419 serves as a coordination point for Mg(2+). Position 437 (G437) interacts with K(+). Residue G437 coordinates Na(+). Positions 437 to 441 are G2; the sequence is GITQQ. Mg(2+) is bound at residue T439. Positions 476–479 are G3; the sequence is DTPG. Residues 530–533 and 599–600 each bind GTP; these read NKID and AV. Residues 530-533 are G4; it reads NKID. Residues 598-600 are G5; sequence SAV.

This sequence belongs to the TRAFAC class translation factor GTPase superfamily. Classic translation factor GTPase family. IF-2 subfamily. The cofactor is Na(+). It depends on K(+) as a cofactor.

The protein localises to the cytoplasm. It carries out the reaction GTP + H2O = GDP + phosphate + H(+). Functionally, plays a role in translation initiation. Translational GTPase that catalyzes the joining of the 40S and 60S subunits to form the 80S initiation complex with the initiator methionine-tRNA in the P-site base paired to the start codon. GTP binding and hydrolysis induces conformational changes in the enzyme that renders it active for productive interactions with the ribosome. The release of the enzyme after formation of the initiation complex is a prerequisite to form elongation-competent ribosomes. Stimulates 20S pre-rRNA cleavage to mature 18S rRNA by PIN-domain endonuclease NOB1. In Saccharomyces cerevisiae (strain ATCC 204508 / S288c) (Baker's yeast), this protein is Eukaryotic translation initiation factor 5B.